Reading from the N-terminus, the 172-residue chain is Carotene biosynthesis-related protein CBR, chloroplastic (172 aa).

Positions 41–66 are disordered; the sequence is AENNPSTPPPSSPSPPPPPPTPAAPT. The span at 46–63 shows a compositional bias: pro residues; sequence STPPPSSPSPPPPPPTPA. A run of 2 helical transmembrane segments spans residues 111 to 131 and 152 to 172; these read PTLIALTFVLFSAASLIPAFA and FAMIGFAAMLVYEGIQGIALF.

Belongs to the ELIP/psbS family.

It is found in the plastid. The protein resides in the chloroplast membrane. Its function is as follows. Putative zeaxanthin binding protein. That forms photoprotective complexes within the light-harvesting antennae. The chain is Carotene biosynthesis-related protein CBR, chloroplastic (CBR) from Dunaliella salina (Green alga).